We begin with the raw amino-acid sequence, 491 residues long: uncharacterized protein (491 aa).

Residue 267–274 participates in ATP binding; sequence GIQGTGKS.

It belongs to the AAA ATPase family. Highly divergent.

The protein localises to the plastid. It localises to the chloroplast. This is an uncharacterized protein from Gracilaria tenuistipitata var. liui (Red alga).